A 262-amino-acid chain; its full sequence is Abhydrolase domain-containing protein ACTT2 (262 aa).

The short motif at 260–262 (SKL) is the Peroxisomal targeting signal type 1 element.

The protein belongs to the AB hydrolase superfamily. AKT2 hydrolase family.

Its subcellular location is the peroxisome. It functions in the pathway mycotoxin biosynthesis. In terms of biological role, abhydrolase domain-containing protein; part of the gene clusters that mediate the biosynthesis of the host-selective toxins (HSTs) ACT-toxins responsible for brown spot of tangerine disease by the tangerine pathotype which affects tangerines and mandarins. ACT-toxins consist of three moieties, 9,10-epoxy-8-hydroxy-9-methyl-decatrienoic acid (EDA), valine and a polyketide. ACT-toxin I is toxic to both citrus and pear; toxin II the 5''-deoxy derivative of ACT-toxin I, is highly toxic to pear and slightly toxic to citrus. On cellular level, ACT-toxins affect plasma membrane of susceptible cells and cause a sudden increase in loss of K(+) after a few minutes of toxin treatment. The acyl-CoA ligase ACTT1, the hydrolase ACTT2, the enoyl-CoA hydratases ACTT3 and ACTT6, and the acyl-CoA synthetase ACTT5 are all involved in the biosynthesis of the AK-, AF- and ACT-toxin common 9,10-epoxy-8-hydroxy-9-methyl-decatrienoic acid (EDA) structural moiety. The exact role of each enzyme, and of additional enzymes identified within the AF-toxin clusters have still to be determined. On the other hand, ACTTS1 to ACTTS4 are specific to the tangerine pathotype. The function of ACTTS3 is to elongate the polyketide chain portion of ACT-toxin that is unique to this toxin. The enoyl-reductase ACTTS2 might complement the missing enoyl-reductase (ER) domain in ACTTS3 in the synthesis of the polyketide portion of ACT-toxin. The roles of the nonribosomal peptide synthetases-related proteins ACTTS1 and ACTTS4 have also still not been elucidated. The chain is Abhydrolase domain-containing protein ACTT2 from Alternaria alternata (Alternaria rot fungus).